The chain runs to 423 residues: Mannose-6-phosphate isomerase (423 aa).

Alanine 2 carries the N-acetylalanine modification. Phosphoserine is present on residues serine 102 and serine 108. Residues glutamine 110, histidine 112, glutamate 137, and histidine 276 each contribute to the Zn(2+) site. Residue arginine 295 is part of the active site.

The protein belongs to the mannose-6-phosphate isomerase type 1 family. Zn(2+) is required as a cofactor. In terms of tissue distribution, expressed in all tissues, but more abundant in heart, brain and skeletal muscle.

It localises to the cytoplasm. The enzyme catalyses D-mannose 6-phosphate = D-fructose 6-phosphate. It functions in the pathway nucleotide-sugar biosynthesis; GDP-alpha-D-mannose biosynthesis; alpha-D-mannose 1-phosphate from D-fructose 6-phosphate: step 1/2. Isomerase that catalyzes the interconversion of fructose-6-P and mannose-6-P and has a critical role in the supply of D-mannose derivatives required for many eukaryotic glycosylation reactions. The chain is Mannose-6-phosphate isomerase from Homo sapiens (Human).